The following is a 351-amino-acid chain: MTIAIGQEEGRGWFDLVDDWLKRDRFVFIGWSGLLLFPTSYLSIGGWFTGTTFVTSWYTHGLASSYLEGCNFFTAAVSTPANSMGHSLLLLWGPEAQGDFTRWCQIGGLWAFCALHGAFGLIGFCLRQFEIARLVGIRPYNAIAFSGPIAIFVSVFLMYPLGQASWFFAPSLGVAAIFRFLLFIQGFHNFTLNPFHMMGVAGILGAALLCAIHGATVQNTIFEDGDAANTFRAFTPTQSEETYSMVTANRFWSQVFGVAFSNKRWLHFFMLFVPLAGLWTSAIGIVGLALNLRAYDFVSQELRAAEDPEFETFYTKNLLLNEGIRSWMAAQDQPHENFIFPEEVLPRGNAL.

Residues threonine 39–threonine 59 form a helical membrane-spanning segment. Chlorophyll a is bound at residue histidine 116. A helical transmembrane segment spans residues glycine 123–proline 139. Pheophytin a contacts are provided by glutamine 128 and asparagine 141. Residues isoleucine 151–alanine 164 traverse the membrane as a helical segment. Histidine 196 lines the chlorophyll a pocket. A helical transmembrane segment spans residues alanine 206–aspartate 226. A plastoquinone-binding residues include histidine 213 and phenylalanine 260. Fe cation is bound at residue histidine 213. Histidine 267 contacts Fe cation. A helical transmembrane segment spans residues glycine 277 to arginine 293.

It belongs to the reaction center PufL/M/PsbA/D family. As to quaternary structure, PSII is composed of 1 copy each of membrane proteins PsbA, PsbB, PsbC, PsbD, PsbE, PsbF, PsbH, PsbI, PsbJ, PsbK, PsbL, PsbM, PsbT, PsbX, PsbY, PsbZ, Psb30/Ycf12, at least 3 peripheral proteins of the oxygen-evolving complex and a large number of cofactors. It forms dimeric complexes. The D1/D2 heterodimer binds P680, chlorophylls that are the primary electron donor of PSII, and subsequent electron acceptors. It shares a non-heme iron and each subunit binds pheophytin, quinone, additional chlorophylls, carotenoids and lipids. There is also a Cl(-1) ion associated with D1 and D2, which is required for oxygen evolution. The PSII complex binds additional chlorophylls, carotenoids and specific lipids. is required as a cofactor.

It localises to the plastid. The protein resides in the chloroplast thylakoid membrane. The catalysed reaction is 2 a plastoquinone + 4 hnu + 2 H2O = 2 a plastoquinol + O2. Its function is as follows. Photosystem II (PSII) is a light-driven water:plastoquinone oxidoreductase that uses light energy to abstract electrons from H(2)O, generating O(2) and a proton gradient subsequently used for ATP formation. It consists of a core antenna complex that captures photons, and an electron transfer chain that converts photonic excitation into a charge separation. The D1/D2 (PsbA/PsbD) reaction center heterodimer binds P680, the primary electron donor of PSII as well as several subsequent electron acceptors. D2 is needed for assembly of a stable PSII complex. This chain is Photosystem II D2 protein, found in Guillardia theta (Cryptophyte).